The primary structure comprises 97 residues: Large ribosomal subunit protein uL23 (97 aa).

This sequence belongs to the universal ribosomal protein uL23 family. As to quaternary structure, part of the 50S ribosomal subunit. Contacts protein L29, and trigger factor when it is bound to the ribosome.

One of the early assembly proteins it binds 23S rRNA. One of the proteins that surrounds the polypeptide exit tunnel on the outside of the ribosome. Forms the main docking site for trigger factor binding to the ribosome. The sequence is that of Large ribosomal subunit protein uL23 from Acidithiobacillus ferrooxidans (strain ATCC 23270 / DSM 14882 / CIP 104768 / NCIMB 8455) (Ferrobacillus ferrooxidans (strain ATCC 23270)).